A 436-amino-acid polypeptide reads, in one-letter code: Drebrin-like protein (436 aa).

The ADF-H domain occupies 2–133; it reads AVNLSRNGPA…EPECIMEKVA (132 aa). T26 bears the Phosphothreonine mark. At S160 the chain carries Phosphoserine. Position 176 is an N6-acetyllysine (K176). The stretch at 179 to 233 forms a coiled coil; the sequence is FWAKAEKEEENRRLEEKRRAEEERQRLEEERRERELQEAARREQRYQEQHRSAGA. Composition is skewed to basic and acidic residues over residues 185 to 229 and 264 to 275; these read KEEE…EQHR and HPREIFKQKERA. A disordered region spans residues 185–341; sequence KEEENRRLEE…AQTEEEPTYE (157 aa). Polar residues predominate over residues 276–286; that stretch reads MSTTSVTSSQP. Phosphoserine occurs at positions 277, 280, 283, and 291. Polar residues predominate over residues 294-303; it reads LQKQLTQPET. Residue K296 is modified to N6-acetyllysine. Phosphothreonine is present on T299. 2 positions are modified to phosphotyrosine: Y340 and Y350. The SH3 domain maps to 377 to 436; that stretch reads GQGLCARALYDYQAADDTEISFDPENLITGIEVIDEGWWRGYGPDGHFGMFPANYVELIE.

It belongs to the ABP1 family. Interacts with SHANK3, SYN1 and PRAM1. Interacts with SHANK2. Interacts with FGD1, DNM1 and MAP4K1. Interacts with ANKRD54. Interacts with COBL. Interacts with WASL and WIPF1. As to expression, detected in hippocampus neurons and in the Purkinje cell layer in cerebellum (at protein level). Predominantly expressed in brain, thymus and spleen. Also found in testis, heart and lung. Little or no expression detected in ovary or muscle.

It localises to the cytoplasm. Its subcellular location is the cytoskeleton. It is found in the cell projection. The protein localises to the lamellipodium. The protein resides in the ruffle. It localises to the cell cortex. Its subcellular location is the cytosol. It is found in the synapse. The protein localises to the perikaryon. The protein resides in the neuron projection. It localises to the cell membrane. Its subcellular location is the cytoplasmic vesicle. It is found in the clathrin-coated vesicle membrane. The protein localises to the golgi apparatus membrane. The protein resides in the podosome. It localises to the early endosome. Its subcellular location is the dendrite. It is found in the postsynaptic density. In terms of biological role, adapter protein that binds F-actin and DNM1, and thereby plays a role in receptor-mediated endocytosis. Plays a role in the reorganization of the actin cytoskeleton, formation of cell projections, such as neurites, in neuron morphogenesis and synapse formation via its interaction with WASL and COBL. Does not bind G-actin and promote actin polymerization by itself. Required for the formation of organized podosome rosettes. May act as a common effector of antigen receptor-signaling pathways in leukocytes. Acts as a key component of the immunological synapse that regulates T-cell activation by bridging TCRs and the actin cytoskeleton to gene activation and endocytic processes. This Mus musculus (Mouse) protein is Drebrin-like protein.